Reading from the N-terminus, the 201-residue chain is Adenylyl-sulfate kinase (201 aa).

35 to 42 contributes to the ATP binding site; that stretch reads GLSGSGKS. Ser109 serves as the catalytic Phosphoserine intermediate.

It belongs to the APS kinase family.

The enzyme catalyses adenosine 5'-phosphosulfate + ATP = 3'-phosphoadenylyl sulfate + ADP + H(+). It participates in sulfur metabolism; hydrogen sulfide biosynthesis; sulfite from sulfate: step 2/3. Catalyzes the synthesis of activated sulfate. This Salmonella gallinarum (strain 287/91 / NCTC 13346) protein is Adenylyl-sulfate kinase.